Here is a 61-residue protein sequence, read N- to C-terminus: Small ribosomal subunit protein uS14 (61 aa).

Residues cysteine 24, cysteine 27, cysteine 40, and cysteine 43 each contribute to the Zn(2+) site.

The protein belongs to the universal ribosomal protein uS14 family. Zinc-binding uS14 subfamily. In terms of assembly, part of the 30S ribosomal subunit. Contacts proteins S3 and S10. The cofactor is Zn(2+).

Binds 16S rRNA, required for the assembly of 30S particles and may also be responsible for determining the conformation of the 16S rRNA at the A site. The polypeptide is Small ribosomal subunit protein uS14 (Campylobacter lari (strain RM2100 / D67 / ATCC BAA-1060)).